Consider the following 129-residue polypeptide: Ferredoxin-1 (129 aa).

The 2Fe-2S ferredoxin-type domain occupies 29 to 120 (SDMDLDDEDY…EVKIVYNAKH (92 aa)). Residues Cys-64, Cys-69, Cys-72, and Cys-103 each coordinate [2Fe-2S] cluster.

It belongs to the 2Fe2S plant-type ferredoxin family. [2Fe-2S] cluster is required as a cofactor.

In terms of biological role, ferredoxins are iron-sulfur proteins that transfer electrons in a wide variety of metabolic reactions. The protein is Ferredoxin-1 (fer1) of Haloarcula marismortui (strain ATCC 43049 / DSM 3752 / JCM 8966 / VKM B-1809) (Halobacterium marismortui).